Reading from the N-terminus, the 454-residue chain is MKLKTKIHLYTSISLLILLILVHTAVYLIFSSALTSKDAARLADETDNIAEALRAAETEGVALQDMLQAYLPANGMVRVVNGDQKAVMTITKEKAYKDFPLSFHSGETADVRKPDGKLFAEAAVPVIWTDGQVVSLQLVERLENTEESLFLLKIILIAASAAVCIASFFAGSLLARRIINPIRRLMITMKDIQRDKEFKTISLEGQSNDELYQMGLTFNEMAMMLKEHYDKQQQFVQDASHELKTPLTIIESYSSLMKRWGAKKPEVLEESIEAIHSEAVHMKKLTNQLLALAKSHQGLEVDLKTIDLIKAARAVMQTLQSVYQRDILLETDKESLLVKADEERIKQLLTILLDNAIKYSEKPIEMSAGTRNGRPFLSVRDEGIGIPEEHIPHLFERFYRADEARNRKTGGTGLGLSIAKQIADEHGIELSVKSKPGQGTAVTMQFSEQNGGGR.

Residues 1-12 (MKLKTKIHLYTS) lie on the Cytoplasmic side of the membrane. A helical transmembrane segment spans residues 13-33 (ISLLILLILVHTAVYLIFSSA). The Extracellular segment spans residues 34 to 153 (LTSKDAARLA…NTEESLFLLK (120 aa)). Residues 154–174 (IILIAASAAVCIASFFAGSLL) traverse the membrane as a helical segment. Topologically, residues 175-454 (ARRIINPIRR…QFSEQNGGGR (280 aa)) are cytoplasmic. In terms of domain architecture, HAMP spans 176–230 (RRIINPIRRLMITMKDIQRDKEFKTISLEGQSNDELYQMGLTFNEMAMMLKEHYD). A Histidine kinase domain is found at 238-450 (DASHELKTPL…AVTMQFSEQN (213 aa)). A Phosphohistidine; by autocatalysis modification is found at His241.

It is found in the cell membrane. It catalyses the reaction ATP + protein L-histidine = ADP + protein N-phospho-L-histidine.. Its function is as follows. Probable member of the two-component regulatory system YkoH/YkoG. Potentially phosphorylates YkoG. This is Sensor histidine kinase YkoH (ykoH) from Bacillus subtilis (strain 168).